The primary structure comprises 396 residues: Elongation factor Tu 2 (396 aa).

In terms of domain architecture, tr-type G spans 10 to 206 (KPHINVGTIG…VLDSYIPEPQ (197 aa)). Positions 19–26 (GHVDHGKT) are G1. GTP is bound at residue 19–26 (GHVDHGKT). Residue Thr-26 participates in Mg(2+) binding. The interval 60 to 64 (GITIN) is G2. The interval 81–84 (DCPG) is G3. Residues 81-85 (DCPGH) and 136-139 (NKAD) each bind GTP. Residues 136-139 (NKAD) form a G4 region. The G5 stretch occupies residues 174-176 (SAL).

Belongs to the TRAFAC class translation factor GTPase superfamily. Classic translation factor GTPase family. EF-Tu/EF-1A subfamily. As to quaternary structure, monomer.

It is found in the cytoplasm. It catalyses the reaction GTP + H2O = GDP + phosphate + H(+). Functionally, GTP hydrolase that promotes the GTP-dependent binding of aminoacyl-tRNA to the A-site of ribosomes during protein biosynthesis. The sequence is that of Elongation factor Tu 2 from Nitrosomonas eutropha (strain DSM 101675 / C91 / Nm57).